Reading from the N-terminus, the 161-residue chain is Phosphopantetheine adenylyltransferase (161 aa).

T9 is a binding site for substrate. ATP contacts are provided by residues 9-10 (TF) and H17. Residues K41, L73, and R87 each coordinate substrate. Residues 88–90 (GLR), E98, and 123–129 (YQFISGT) each bind ATP.

Belongs to the bacterial CoaD family. As to quaternary structure, homohexamer. It depends on Mg(2+) as a cofactor.

It localises to the cytoplasm. It carries out the reaction (R)-4'-phosphopantetheine + ATP + H(+) = 3'-dephospho-CoA + diphosphate. It participates in cofactor biosynthesis; coenzyme A biosynthesis; CoA from (R)-pantothenate: step 4/5. In terms of biological role, reversibly transfers an adenylyl group from ATP to 4'-phosphopantetheine, yielding dephospho-CoA (dPCoA) and pyrophosphate. The sequence is that of Phosphopantetheine adenylyltransferase from Cupriavidus taiwanensis (strain DSM 17343 / BCRC 17206 / CCUG 44338 / CIP 107171 / LMG 19424 / R1) (Ralstonia taiwanensis (strain LMG 19424)).